An 865-amino-acid polypeptide reads, in one-letter code: AdoMet-dependent rRNA methyltransferase SPB1 (865 aa).

S-adenosyl-L-methionine-binding residues include G56, W58, D76, D92, and D117. The active-site Proton acceptor is the K157. Coiled coils occupy residues 358–400 (ESMD…VRMQ) and 462–492 (GETDDESDEELDRLETELDDMYDQFRERKAA). Disordered regions lie at residues 370–396 (LEKLKERNSTKKKRERRKENERKQKDI) and 443–676 (VVAS…TKDG). Positions 386-396 (RKENERKQKDI) are enriched in basic and acidic residues. The segment covering 463 to 483 (ETDDESDEELDRLETELDDMY) has biased composition (acidic residues). A compositionally biased stretch (basic and acidic residues) spans 484–497 (DQFRERKAASDAKY). A compositionally biased stretch (acidic residues) spans 526–545 (ISDDSELEEESSGDSDDEDD). Residues 556 to 566 (LDTTPSDNSGL) are compositionally biased toward polar residues. Residues 600–609 (GEDEDADMED) are compositionally biased toward acidic residues. Basic and acidic residues-rich tracts occupy residues 610 to 627 (TVSKADSKKTKEKTADKK) and 659 to 676 (KSGKEDDWEDEDKRTKDG). A coiled-coil region spans residues 762 to 789 (REAKGRKKMKAAQRLEKLKKKSDLLVNE).

The protein belongs to the class I-like SAM-binding methyltransferase superfamily. RNA methyltransferase RlmE family. SPB1 subfamily. In terms of assembly, component of the nucleolar and nucleoplasmic pre-60S ribosomal particle.

Its subcellular location is the nucleus. The protein resides in the nucleolus. It catalyses the reaction a ribonucleotide in rRNA + S-adenosyl-L-methionine = a 2'-O-methylribonucleotide in rRNA + S-adenosyl-L-homocysteine + H(+). Required for proper assembly of pre-ribosomal particles during the biogenesis of the 60S ribosomal subunit. This is AdoMet-dependent rRNA methyltransferase SPB1 from Pyricularia oryzae (strain 70-15 / ATCC MYA-4617 / FGSC 8958) (Rice blast fungus).